The chain runs to 397 residues: Purine ribonucleoside efflux pump NepI (397 aa).

Over 1–21 (MNENIAEKFRADGVARPNWSA) the chain is Cytoplasmic. A helical membrane pass occupies residues 22 to 42 (VFAVAFCVACLITVEFLPVSL). The Periplasmic portion of the chain corresponds to 43–54 (LTPMAQDLGISE). Residues 55 to 75 (GVAGQSVTVTAFVAMFSSLFI) traverse the membrane as a helical segment. Over 76–85 (TQIIQATDRR) the chain is Cytoplasmic. The chain crosses the membrane as a helical span at residues 86 to 106 (YIVILFAVLLTASCLMVSFAN). A topological domain (periplasmic) is located at residue Ser107. The helical transmembrane segment at 108–128 (FTLLLLGRACLGLALGGFWAM) threads the bilayer. The Cytoplasmic portion of the chain corresponds to 129 to 147 (SASLTMRLVPARTVPKALS). Residues 148 to 168 (VIFGAVSIALVIAAPLGSFLG) form a helical membrane-spanning segment. The Periplasmic segment spans residues 169–175 (GIIGWRN). Residues 176 to 196 (VFNAAAVMGVLCVIWVVKSLP) traverse the membrane as a helical segment. Topologically, residues 197–215 (SLPGEPSHQKQNMFSLLQR) are cytoplasmic. The chain crosses the membrane as a helical span at residues 216 to 236 (PGVMAGMIAIFMSFAGQFAFF). At 237–255 (TYIRPVYMNLAGFDVDGLT) the chain is on the periplasmic side. The chain crosses the membrane as a helical span at residues 256–276 (LVLLSFGIASFVGTSFSSYVL). Topologically, residues 277–281 (KRSVK) are cytoplasmic. A helical transmembrane segment spans residues 282 to 302 (LALAGAPLLLALSALTLIVWG). Topologically, residues 303–305 (SDK) are periplasmic. Residues 306–326 (TVAAAIAIIWGLAFALVPVGW) form a helical membrane-spanning segment. Over 327–343 (STWITRSLADQAEKAGS) the chain is Cytoplasmic. A helical transmembrane segment spans residues 344–364 (IQVAVIQLANTCGAAVGGYAL). Over 365–366 (DN) the chain is Periplasmic. A helical transmembrane segment spans residues 367 to 387 (FGLLSPLALSGGLMLLTALVV). Over 388 to 397 (AAKVRITPMS) the chain is Cytoplasmic.

Belongs to the major facilitator superfamily. DHA1 family. NepI (TC 2.A.1.2.26) subfamily.

It is found in the cell inner membrane. The enzyme catalyses inosine(in) + H(+)(out) = inosine(out) + H(+)(in). It carries out the reaction guanosine(in) + H(+)(out) = guanosine(out) + H(+)(in). Involved in the efflux of purine ribonucleosides, such as inosine and guanosine. This is Purine ribonucleoside efflux pump NepI from Salmonella choleraesuis (strain SC-B67).